We begin with the raw amino-acid sequence, 758 residues long: 5-methyltetrahydropteroyltriglutamate--homocysteine methyltransferase (758 aa).

Residues 16-19 (RELK) and K112 contribute to the 5-methyltetrahydropteroyltri-L-glutamate site. L-homocysteine contacts are provided by residues 433-435 (IGS) and E486. Residues 433–435 (IGS) and E486 contribute to the L-methionine site. Residues 517 to 518 (RC) and W563 contribute to the 5-methyltetrahydropteroyltri-L-glutamate site. D601 contributes to the L-homocysteine binding site. D601 lines the L-methionine pocket. A 5-methyltetrahydropteroyltri-L-glutamate-binding site is contributed by E607. H643, C645, and E667 together coordinate Zn(2+). The Proton donor role is filled by H696. C728 provides a ligand contact to Zn(2+).

This sequence belongs to the vitamin-B12 independent methionine synthase family. Zn(2+) is required as a cofactor.

It carries out the reaction 5-methyltetrahydropteroyltri-L-glutamate + L-homocysteine = tetrahydropteroyltri-L-glutamate + L-methionine. The protein operates within amino-acid biosynthesis; L-methionine biosynthesis via de novo pathway; L-methionine from L-homocysteine (MetE route): step 1/1. Functionally, catalyzes the transfer of a methyl group from 5-methyltetrahydrofolate to homocysteine resulting in methionine formation. This Neisseria meningitidis serogroup C / serotype 2a (strain ATCC 700532 / DSM 15464 / FAM18) protein is 5-methyltetrahydropteroyltriglutamate--homocysteine methyltransferase.